The chain runs to 94 residues: Protein S100-A1 (94 aa).

EF-hand domains are found at residues 13-48 and 50-85; these read INVF…FLDA and KDVD…LTVA. Residues Lys28, Glu33, Asp63, Asn65, Asp67, Glu69, and Glu74 each coordinate Ca(2+). Position 86 is an S-nitrosocysteine (Cys86).

This sequence belongs to the S-100 family. As to quaternary structure, dimer of either two alpha chains, or two beta chains, or one alpha and one beta chain. Also forms heterodimers with S100P. Interacts with AGER. Interacts with CAPZA1. Interacts with FKBP4. Interacts with RYR1 and RYR2. Interacts with CACYBP in a calcium-dependent manner. Interacts with PPP5C (via TPR repeats); the interaction is calcium-dependent and modulates PPP5C activity. Interacts with ATP2A2 and PLN in a Ca(2+)-dependent manner. Interacts with mitochondrial F1-ATPase subunits ATP5F1A and ATP5F1B; these interactions increase F1-ATPase activity. Glutathionylated; glutathionylation increases affinity to calcium about 10-fold. In terms of tissue distribution, highly prevalent in heart. Also found in lesser quantities in skeletal muscle and brain.

The protein resides in the cytoplasm. It localises to the sarcoplasmic reticulum. It is found in the mitochondrion. Small calcium binding protein that plays important roles in several biological processes such as Ca(2+) homeostasis, chondrocyte biology and cardiomyocyte regulation. In response to an increase in intracellular Ca(2+) levels, binds calcium which triggers conformational changes. These changes allow interactions with specific target proteins and modulate their activity. Regulates a network in cardiomyocytes controlling sarcoplasmic reticulum Ca(2+) cycling and mitochondrial function through interaction with the ryanodine receptors RYR1 and RYR2, sarcoplasmic reticulum Ca(2+)-ATPase/ATP2A2 and mitochondrial F1-ATPase. Facilitates diastolic Ca(2+) dissociation and myofilament mechanics in order to improve relaxation during diastole. In Homo sapiens (Human), this protein is Protein S100-A1 (S100A1).